We begin with the raw amino-acid sequence, 70 residues long: Large ribosomal subunit protein eL38 (70 aa).

Belongs to the eukaryotic ribosomal protein eL38 family.

This chain is Large ribosomal subunit protein eL38 (RpL38), found in Plutella xylostella (Diamondback moth).